The following is a 115-amino-acid chain: Large ribosomal subunit protein bL19 (115 aa).

This sequence belongs to the bacterial ribosomal protein bL19 family.

This protein is located at the 30S-50S ribosomal subunit interface and may play a role in the structure and function of the aminoacyl-tRNA binding site. The chain is Large ribosomal subunit protein bL19 from Streptococcus pneumoniae serotype 2 (strain D39 / NCTC 7466).